The chain runs to 499 residues: Aspartyl/glutamyl-tRNA(Asn/Gln) amidotransferase subunit B (499 aa).

Belongs to the GatB/GatE family. GatB subfamily. In terms of assembly, heterotrimer of A, B and C subunits.

The catalysed reaction is L-glutamyl-tRNA(Gln) + L-glutamine + ATP + H2O = L-glutaminyl-tRNA(Gln) + L-glutamate + ADP + phosphate + H(+). The enzyme catalyses L-aspartyl-tRNA(Asn) + L-glutamine + ATP + H2O = L-asparaginyl-tRNA(Asn) + L-glutamate + ADP + phosphate + 2 H(+). Functionally, allows the formation of correctly charged Asn-tRNA(Asn) or Gln-tRNA(Gln) through the transamidation of misacylated Asp-tRNA(Asn) or Glu-tRNA(Gln) in organisms which lack either or both of asparaginyl-tRNA or glutaminyl-tRNA synthetases. The reaction takes place in the presence of glutamine and ATP through an activated phospho-Asp-tRNA(Asn) or phospho-Glu-tRNA(Gln). The chain is Aspartyl/glutamyl-tRNA(Asn/Gln) amidotransferase subunit B from Bartonella quintana (strain Toulouse) (Rochalimaea quintana).